The sequence spans 763 residues: Phosphoglycerol transferase I (763 aa).

4 helical membrane passes run 1-21 (MSEL…AWKA), 26-46 (WWFA…ITLF), 77-97 (ILPG…LGWI), and 108-128 (FGYS…SPAF).

Belongs to the OpgB family.

It is found in the cell inner membrane. The catalysed reaction is a phosphatidylglycerol + a membrane-derived-oligosaccharide D-glucose = a 1,2-diacyl-sn-glycerol + a membrane-derived-oligosaccharide 6-(glycerophospho)-D-glucose.. The protein operates within glycan metabolism; osmoregulated periplasmic glucan (OPG) biosynthesis. Its function is as follows. Transfers a phosphoglycerol residue from phosphatidylglycerol to the membrane-bound nascent glucan backbones. The sequence is that of Phosphoglycerol transferase I from Escherichia coli O6:K15:H31 (strain 536 / UPEC).